A 164-amino-acid chain; its full sequence is UPF0304 protein CKO_00501 (164 aa).

This sequence belongs to the UPF0304 family.

This chain is UPF0304 protein CKO_00501, found in Citrobacter koseri (strain ATCC BAA-895 / CDC 4225-83 / SGSC4696).